The primary structure comprises 172 residues: Epididymal secretory protein 4 (172 aa).

A signal peptide spans 1 to 21 (MIAVLLLVFGMTPDYIFPVSA). Residues C82 and C167 are joined by a disulfide bond.

The protein belongs to the calycin superfamily. Lipocalin family. In terms of tissue distribution, secreted by the epididymal epithelial cells.

It localises to the secreted. It is found in the extracellular space. Its function is as follows. Could transport small hydrophobic molecules into the epididymal fluid during the sperm maturation. Binds to the head region of spermatozoa and plays a key role in sperm maturation. The polypeptide is Epididymal secretory protein 4 (Zootoca vivipara (Common lizard)).